A 352-amino-acid polypeptide reads, in one-letter code: Selenide, water dikinase (352 aa).

Cysteine 23 is a catalytic residue. Residues lysine 26 and 54–56 (SRD) each bind ATP. Position 57 (aspartate 57) interacts with Mg(2+). ATP-binding positions include aspartate 74, aspartate 97, and 145-147 (GHS). Residue aspartate 97 coordinates Mg(2+). Aspartate 233 serves as a coordination point for Mg(2+).

This sequence belongs to the selenophosphate synthase 1 family. Class I subfamily. In terms of assembly, homodimer. Mg(2+) serves as cofactor.

It catalyses the reaction hydrogenselenide + ATP + H2O = selenophosphate + AMP + phosphate + 2 H(+). Synthesizes selenophosphate from selenide and ATP. The polypeptide is Selenide, water dikinase (Shewanella sp. (strain MR-7)).